The sequence spans 152 residues: Lipoprotein signal peptidase (152 aa).

2 helical membrane-spanning segments follow: residues 55 to 75 (NGRWFFVAVAALAVAGILYYL) and 87 to 107 (VALGLVMGGAVGNMIDRIATG). Catalysis depends on residues aspartate 111 and aspartate 129. A helical membrane pass occupies residues 125–145 (FNVADICVTVGVGLLFLHLVL).

The protein belongs to the peptidase A8 family.

The protein resides in the cell membrane. The catalysed reaction is Release of signal peptides from bacterial membrane prolipoproteins. Hydrolyzes -Xaa-Yaa-Zaa-|-(S,diacylglyceryl)Cys-, in which Xaa is hydrophobic (preferably Leu), and Yaa (Ala or Ser) and Zaa (Gly or Ala) have small, neutral side chains.. It participates in protein modification; lipoprotein biosynthesis (signal peptide cleavage). This protein specifically catalyzes the removal of signal peptides from prolipoproteins. The sequence is that of Lipoprotein signal peptidase from Symbiobacterium thermophilum (strain DSM 24528 / JCM 14929 / IAM 14863 / T).